The primary structure comprises 255 residues: L-erythrulose-1-phosphate isomerase (255 aa).

The Electrophile role is filled by His98. Residue Glu171 is the Proton acceptor of the active site. Positions 177 and 214 each coordinate substrate.

This sequence belongs to the triosephosphate isomerase family. As to quaternary structure, homodimer.

The protein resides in the cytoplasm. The catalysed reaction is L-erythrulose 1-phosphate = D-erythrulose 4-phosphate. It functions in the pathway carbohydrate metabolism; erythritol degradation. Its function is as follows. Catalyzes the isomerization of D-erythrulose-4P to L-erythrulose-1P. The polypeptide is L-erythrulose-1-phosphate isomerase (Rhizobium meliloti (strain 1021) (Ensifer meliloti)).